We begin with the raw amino-acid sequence, 281 residues long: 2,3,4,5-tetrahydropyridine-2,6-dicarboxylate N-succinyltransferase (281 aa).

Arg108 and Asp145 together coordinate substrate.

This sequence belongs to the transferase hexapeptide repeat family. As to quaternary structure, homotrimer.

Its subcellular location is the cytoplasm. The enzyme catalyses (S)-2,3,4,5-tetrahydrodipicolinate + succinyl-CoA + H2O = (S)-2-succinylamino-6-oxoheptanedioate + CoA. The protein operates within amino-acid biosynthesis; L-lysine biosynthesis via DAP pathway; LL-2,6-diaminopimelate from (S)-tetrahydrodipicolinate (succinylase route): step 1/3. The protein is 2,3,4,5-tetrahydropyridine-2,6-dicarboxylate N-succinyltransferase of Rhodopseudomonas palustris (strain BisA53).